Here is a 220-residue protein sequence, read N- to C-terminus: Small ribosomal subunit protein uS2 (220 aa).

The tract at residues 201-220 (LPPDGDLPEPPSEFEVKFKR) is disordered.

Belongs to the universal ribosomal protein uS2 family.

This chain is Small ribosomal subunit protein uS2, found in Staphylothermus marinus (strain ATCC 43588 / DSM 3639 / JCM 9404 / F1).